A 706-amino-acid polypeptide reads, in one-letter code: Ribosomal RNA large subunit methyltransferase K/L (706 aa).

Residues 43–154 (LMYQSLLWSR…RDMASVALDL (112 aa)) form the THUMP domain.

This sequence belongs to the methyltransferase superfamily. RlmKL family.

It is found in the cytoplasm. It carries out the reaction guanosine(2445) in 23S rRNA + S-adenosyl-L-methionine = N(2)-methylguanosine(2445) in 23S rRNA + S-adenosyl-L-homocysteine + H(+). It catalyses the reaction guanosine(2069) in 23S rRNA + S-adenosyl-L-methionine = N(2)-methylguanosine(2069) in 23S rRNA + S-adenosyl-L-homocysteine + H(+). Functionally, specifically methylates the guanine in position 2445 (m2G2445) and the guanine in position 2069 (m7G2069) of 23S rRNA. The protein is Ribosomal RNA large subunit methyltransferase K/L of Yersinia pestis (strain Pestoides F).